The primary structure comprises 279 residues: MAALGRPFSGLPLSGGSDFLQPPQPAFPGRAFPPGADGAELAPRPGPRAVPSSPAGSAARGRVSVHCKKKHKREEEEDDDCPVRKKRITEAELCAGPNDWILCAHQDVEGHGVNPSVSGLSIPGILDVICEEMDQTTGEPQCEVARRKLQEIEDRIIDEDEEVEADRNVNHLPSLVLSDTMKTGLKREFDEVFTKKMIESMSRPSMELVLWKPLPELLSDKPKPSSNTKNYTGESQAKHVAAGTAFPQRTELFSEPRPTGMSLYNSLETATSTEEEMEL.

Residues 1 to 82 are disordered; that stretch reads MAALGRPFSG…REEEEDDDCP (82 aa). Position 48 is an omega-N-methylarginine (Arg-48). Ser-53 bears the Phosphoserine mark. Basic residues predominate over residues 63 to 72; the sequence is VSVHCKKKHK. The stretch at 141–168 forms a coiled coil; that stretch reads QCEVARRKLQEIEDRIIDEDEEVEADRN. Residues 217 to 279 form a disordered region; sequence LLSDKPKPSS…ATSTEEEMEL (63 aa). Composition is skewed to polar residues over residues 224–235 and 262–272; these read PSSNTKNYTGES and SLYNSLETATS.

As to quaternary structure, interacts with CIAO2B; the interaction is direct. Interacts with MMS19; the interaction is indirect.

It localises to the cytoplasm. The protein resides in the cytoskeleton. Its subcellular location is the spindle. The protein localises to the nucleus. Its function is as follows. Facilitates DNA repair, cell cycle progression, and cell proliferation through its interaction with CIAO2B. This chain is Coiled-coil domain-containing protein 117, found in Homo sapiens (Human).